The chain runs to 288 residues: Probable endonuclease 4 (288 aa).

9 residues coordinate Zn(2+): H75, H115, E153, D187, H190, H224, D237, H239, and E269.

This sequence belongs to the AP endonuclease 2 family. Zn(2+) serves as cofactor.

It catalyses the reaction Endonucleolytic cleavage to 5'-phosphooligonucleotide end-products.. Endonuclease IV plays a role in DNA repair. It cleaves phosphodiester bonds at apurinic or apyrimidinic (AP) sites, generating a 3'-hydroxyl group and a 5'-terminal sugar phosphate. In Chlamydia trachomatis serovar L2 (strain ATCC VR-902B / DSM 19102 / 434/Bu), this protein is Probable endonuclease 4.